Consider the following 512-residue polypeptide: Histidine ammonia-lyase (512 aa).

The segment at residues 146–148 (ASG) is a cross-link (5-imidazolinone (Ala-Gly)). A 2,3-didehydroalanine (Ser) modification is found at S147.

It belongs to the PAL/histidase family. Post-translationally, contains an active site 4-methylidene-imidazol-5-one (MIO), which is formed autocatalytically by cyclization and dehydration of residues Ala-Ser-Gly.

It localises to the cytoplasm. The catalysed reaction is L-histidine = trans-urocanate + NH4(+). Its pathway is amino-acid degradation; L-histidine degradation into L-glutamate; N-formimidoyl-L-glutamate from L-histidine: step 1/3. This chain is Histidine ammonia-lyase, found in Paracidovorax citrulli (strain AAC00-1) (Acidovorax citrulli).